Here is a 68-residue protein sequence, read N- to C-terminus: Protein SlyX homolog (68 aa).

Belongs to the SlyX family.

The polypeptide is Protein SlyX homolog (Brucella anthropi (strain ATCC 49188 / DSM 6882 / CCUG 24695 / JCM 21032 / LMG 3331 / NBRC 15819 / NCTC 12168 / Alc 37) (Ochrobactrum anthropi)).